Consider the following 83-residue polypeptide: Large ribosomal subunit protein bL27 (83 aa).

The protein belongs to the bacterial ribosomal protein bL27 family.

This Treponema denticola (strain ATCC 35405 / DSM 14222 / CIP 103919 / JCM 8153 / KCTC 15104) protein is Large ribosomal subunit protein bL27.